The chain runs to 545 residues: Glucose-6-phosphate isomerase (545 aa).

E351 (proton donor) is an active-site residue. Residues H382 and K510 contribute to the active site.

This sequence belongs to the GPI family.

The protein localises to the cytoplasm. The enzyme catalyses alpha-D-glucose 6-phosphate = beta-D-fructose 6-phosphate. The protein operates within carbohydrate biosynthesis; gluconeogenesis. It functions in the pathway carbohydrate degradation; glycolysis; D-glyceraldehyde 3-phosphate and glycerone phosphate from D-glucose: step 2/4. Functionally, catalyzes the reversible isomerization of glucose-6-phosphate to fructose-6-phosphate. The polypeptide is Glucose-6-phosphate isomerase (Shewanella putrefaciens (strain CN-32 / ATCC BAA-453)).